The following is a 480-amino-acid chain: ATP synthase subunit beta (480 aa).

153-160 (GGAGVGKT) provides a ligand contact to ATP.

This sequence belongs to the ATPase alpha/beta chains family. As to quaternary structure, F-type ATPases have 2 components, CF(1) - the catalytic core - and CF(0) - the membrane proton channel. CF(1) has five subunits: alpha(3), beta(3), gamma(1), delta(1), epsilon(1). CF(0) has three main subunits: a(1), b(2) and c(9-12). The alpha and beta chains form an alternating ring which encloses part of the gamma chain. CF(1) is attached to CF(0) by a central stalk formed by the gamma and epsilon chains, while a peripheral stalk is formed by the delta and b chains.

The protein resides in the cell membrane. The enzyme catalyses ATP + H2O + 4 H(+)(in) = ADP + phosphate + 5 H(+)(out). In terms of biological role, produces ATP from ADP in the presence of a proton gradient across the membrane. The catalytic sites are hosted primarily by the beta subunits. This is ATP synthase subunit beta from Lactobacillus gasseri (strain ATCC 33323 / DSM 20243 / BCRC 14619 / CIP 102991 / JCM 1131 / KCTC 3163 / NCIMB 11718 / NCTC 13722 / AM63).